Consider the following 178-residue polypeptide: Large ribosomal subunit protein uL5 (178 aa).

It belongs to the universal ribosomal protein uL5 family. As to quaternary structure, part of the 50S ribosomal subunit; contacts the 5S rRNA and probably tRNA. Forms a bridge to the 30S subunit in the 70S ribosome.

Functionally, this is one of the proteins that bind and probably mediate the attachment of the 5S RNA into the large ribosomal subunit, where it forms part of the central protuberance. In the 70S ribosome it contacts protein S13 of the 30S subunit (bridge B1b), connecting the 2 subunits; this bridge is implicated in subunit movement. May contact the P site tRNA; the 5S rRNA and some of its associated proteins might help stabilize positioning of ribosome-bound tRNAs. This chain is Large ribosomal subunit protein uL5, found in Archaeoglobus fulgidus (strain ATCC 49558 / DSM 4304 / JCM 9628 / NBRC 100126 / VC-16).